Consider the following 137-residue polypeptide: Competence protein ComGG (137 aa).

Residues 10–30 traverse the membrane as a helical segment; it reads GVLLYAVTIAAIFSLLLQFYL. The segment at 106–137 is disordered; that stretch reads EKRDKKEEVATDSSEKVEKKKSEEKPEKKENS.

In terms of assembly, the transformation pili are flexible filaments, consisting mainly of the major pilin ComGC and smaller amounts of the minor pilins, including at least ComGD, ComGF and ComGG, and perhaps ComGE. Interacts with ComGC; the interaction is probably direct. Interacts with ComGD. Interacts with ComGE. Interacts with ComGF. May act as a link between ComGC, ComGD and ComGF.

It is found in the fimbrium. It localises to the cell membrane. Required for formation of the type IV-like pilus (T4P) that plays a role in transformation. Transformation pili are dynamically extended and retracted, perhaps thereby promoting DNA uptake and transformation. Required for transformation. This is Competence protein ComGG from Streptococcus pneumoniae (strain ATCC BAA-255 / R6).